We begin with the raw amino-acid sequence, 251 residues long: Hydroxyacylglutathione hydrolase (251 aa).

The Zn(2+) site is built by His53, His55, Asp57, His58, His110, Asp127, and His165.

It belongs to the metallo-beta-lactamase superfamily. Glyoxalase II family. Monomer. Zn(2+) serves as cofactor.

It catalyses the reaction an S-(2-hydroxyacyl)glutathione + H2O = a 2-hydroxy carboxylate + glutathione + H(+). Its pathway is secondary metabolite metabolism; methylglyoxal degradation; (R)-lactate from methylglyoxal: step 2/2. In terms of biological role, thiolesterase that catalyzes the hydrolysis of S-D-lactoyl-glutathione to form glutathione and D-lactic acid. This is Hydroxyacylglutathione hydrolase from Edwardsiella ictaluri (strain 93-146).